The sequence spans 496 residues: UDP-N-acetylmuramate--L-alanine ligase (496 aa).

Residue 122–128 (GTHGKTT) coordinates ATP.

Belongs to the MurCDEF family.

Its subcellular location is the cytoplasm. The catalysed reaction is UDP-N-acetyl-alpha-D-muramate + L-alanine + ATP = UDP-N-acetyl-alpha-D-muramoyl-L-alanine + ADP + phosphate + H(+). It functions in the pathway cell wall biogenesis; peptidoglycan biosynthesis. Functionally, cell wall formation. The polypeptide is UDP-N-acetylmuramate--L-alanine ligase (Mycolicibacterium paratuberculosis (strain ATCC BAA-968 / K-10) (Mycobacterium paratuberculosis)).